A 193-amino-acid polypeptide reads, in one-letter code: Epididymal-specific lipocalin-12 (193 aa).

The N-terminal stretch at methionine 1 to serine 19 is a signal peptide. The cysteines at positions 88 and 193 are disulfide-linked. Residues asparagine 143 and asparagine 172 are each glycosylated (N-linked (GlcNAc...) asparagine).

The protein belongs to the calycin superfamily. Lipocalin family. As to quaternary structure, monomer. In terms of tissue distribution, expressed in epididymis.

It localises to the secreted. Functionally, binds all-trans retinoic acid and may act as a retinoid carrier protein within the epididymis. May play a role in male fertility. In Mus musculus (Mouse), this protein is Epididymal-specific lipocalin-12 (Lcn12).